A 714-amino-acid chain; its full sequence is MEMASAFTLNVRLDNIAIITIDVPGEKMNTLKAEFASQVRAIIKQLRENKELRGVVFVSAKPDNFIAGADINMIGNCKTAQEAEVLARQGQQLMAEIHALPIPVIAAIHGACLGGGLELALACHGRVCTDDPKTVLGLPEVQLGLLPGSGGTQRLPRLIGVSTALEMILTGKQLRAKQAVKLGLVDDVVPHSILLEAAVELAKQDRPSSRPLPVRERILAGPLGRALLFKMVGKKTEHKTQGNYPATERILEVVETGLAQGTSSGYDAEARAFGELAMTPQSQALRNIFFASTEVKKDPGSDAPPAPLNSVGILGGGLMGGGIAYVTACKAGLPVRIKDINPRGINHALKYSWDQLEGKVRRRHLKASERDKQLALISGTTDYCGFAHRDLIIEAVFENLELKQQMVAEVEQNCATHTIFASNTSSLPIGDIAAHAARPEQVIGLHFFSPVEKMPLVEIIPHASTSAQTIATTVKLAKKQGKTPIVVRDKAGFYVNRILAPYINEAIRMLTEGERIEHIDAALVKFGFPVGPIQLLDEVGIDTGTKIIPVLEAAYGERFSAPANVVSSILNDDRKGRKNGRGFYLYGQKGRKSKKQVDPAIYPLIGAQGQGRLSAPQVAERCVMLMLNEAVRCLDEQVIRSVRDGDIGAVFGIGFPPFLGGPFRYIDSLGAGEVVAIMQRLATQYGSRFTPCDRLVEMSERGESFWKTTATDLQ.

Residues M1–P190 form an enoyl-CoA hydratase region. Residues A306–Q714 are 3-hydroxyacyl-CoA dehydrogenase.

This sequence in the N-terminal section; belongs to the enoyl-CoA hydratase/isomerase family. In the central section; belongs to the 3-hydroxyacyl-CoA dehydrogenase family. As to quaternary structure, heterotetramer of two alpha chains (FadJ) and two beta chains (FadI).

It localises to the cytoplasm. The enzyme catalyses a (3S)-3-hydroxyacyl-CoA = a (2E)-enoyl-CoA + H2O. It catalyses the reaction a 4-saturated-(3S)-3-hydroxyacyl-CoA = a (3E)-enoyl-CoA + H2O. The catalysed reaction is a (3S)-3-hydroxyacyl-CoA + NAD(+) = a 3-oxoacyl-CoA + NADH + H(+). It carries out the reaction (3S)-3-hydroxybutanoyl-CoA = (3R)-3-hydroxybutanoyl-CoA. The protein operates within lipid metabolism; fatty acid beta-oxidation. Catalyzes the formation of a hydroxyacyl-CoA by addition of water on enoyl-CoA. Also exhibits 3-hydroxyacyl-CoA epimerase and 3-hydroxyacyl-CoA dehydrogenase activities. In Escherichia coli O81 (strain ED1a), this protein is Fatty acid oxidation complex subunit alpha.